We begin with the raw amino-acid sequence, 401 residues long: tRNA(Met) cytidine acetate ligase (401 aa).

Residues 7–20 (VVEYNPFHNGHLYH), G101, N160, and 185–186 (RI) contribute to the ATP site.

It belongs to the TmcAL family.

Its subcellular location is the cytoplasm. It catalyses the reaction cytidine(34) in elongator tRNA(Met) + acetate + ATP = N(4)-acetylcytidine(34) in elongator tRNA(Met) + AMP + diphosphate. In terms of biological role, catalyzes the formation of N(4)-acetylcytidine (ac(4)C) at the wobble position of elongator tRNA(Met), using acetate and ATP as substrates. First activates an acetate ion to form acetyladenylate (Ac-AMP) and then transfers the acetyl group to tRNA to form ac(4)C34. The polypeptide is tRNA(Met) cytidine acetate ligase (Anoxybacillus flavithermus (strain DSM 21510 / WK1)).